We begin with the raw amino-acid sequence, 969 residues long: RNA polymerase-associated protein RapA (969 aa).

Positions 164 to 334 constitute a Helicase ATP-binding domain; it reads EVGRRHAPRV…FARLRLLDPD (171 aa). Residue 177–184 coordinates ATP; it reads DEVGLGKT. The short motif at 280-283 is the DEAH box element; sequence DEAH. Residues 492–679 enclose the Helicase C-terminal domain; sequence RVNWLIEKIQ…ESAKLNQSLK (188 aa).

The protein belongs to the SNF2/RAD54 helicase family. RapA subfamily. In terms of assembly, interacts with the RNAP. Has a higher affinity for the core RNAP than for the holoenzyme. Its ATPase activity is stimulated by binding to RNAP.

Functionally, transcription regulator that activates transcription by stimulating RNA polymerase (RNAP) recycling in case of stress conditions such as supercoiled DNA or high salt concentrations. Probably acts by releasing the RNAP, when it is trapped or immobilized on tightly supercoiled DNA. Does not activate transcription on linear DNA. Probably not involved in DNA repair. This chain is RNA polymerase-associated protein RapA, found in Vibrio atlanticus (strain LGP32) (Vibrio splendidus (strain Mel32)).